Consider the following 355-residue polypeptide: Holliday junction branch migration complex subunit RuvB (355 aa).

Residues 4 to 195 form a large ATPase domain (RuvB-L) region; the sequence is TDKLTGADRL…FGIVARLEFY (192 aa). ATP contacts are provided by residues L34, R35, G76, K79, T80, T81, 142-144, R185, Y195, and R232; that span reads EDY. T80 contributes to the Mg(2+) binding site. Positions 196–266 are small ATPAse domain (RuvB-S); the sequence is TPDELARIVA…LADAALEMLD (71 aa). Residues 269–355 are head domain (RuvB-H); sequence SVGFDLMDRK…DGGADLAEGL (87 aa). Residues R305, R324, and R329 each contribute to the DNA site.

Belongs to the RuvB family. In terms of assembly, homohexamer. Forms an RuvA(8)-RuvB(12)-Holliday junction (HJ) complex. HJ DNA is sandwiched between 2 RuvA tetramers; dsDNA enters through RuvA and exits via RuvB. An RuvB hexamer assembles on each DNA strand where it exits the tetramer. Each RuvB hexamer is contacted by two RuvA subunits (via domain III) on 2 adjacent RuvB subunits; this complex drives branch migration. In the full resolvosome a probable DNA-RuvA(4)-RuvB(12)-RuvC(2) complex forms which resolves the HJ.

It localises to the cytoplasm. It catalyses the reaction ATP + H2O = ADP + phosphate + H(+). In terms of biological role, the RuvA-RuvB-RuvC complex processes Holliday junction (HJ) DNA during genetic recombination and DNA repair, while the RuvA-RuvB complex plays an important role in the rescue of blocked DNA replication forks via replication fork reversal (RFR). RuvA specifically binds to HJ cruciform DNA, conferring on it an open structure. The RuvB hexamer acts as an ATP-dependent pump, pulling dsDNA into and through the RuvAB complex. RuvB forms 2 homohexamers on either side of HJ DNA bound by 1 or 2 RuvA tetramers; 4 subunits per hexamer contact DNA at a time. Coordinated motions by a converter formed by DNA-disengaged RuvB subunits stimulates ATP hydrolysis and nucleotide exchange. Immobilization of the converter enables RuvB to convert the ATP-contained energy into a lever motion, pulling 2 nucleotides of DNA out of the RuvA tetramer per ATP hydrolyzed, thus driving DNA branch migration. The RuvB motors rotate together with the DNA substrate, which together with the progressing nucleotide cycle form the mechanistic basis for DNA recombination by continuous HJ branch migration. Branch migration allows RuvC to scan DNA until it finds its consensus sequence, where it cleaves and resolves cruciform DNA. In Cupriavidus metallidurans (strain ATCC 43123 / DSM 2839 / NBRC 102507 / CH34) (Ralstonia metallidurans), this protein is Holliday junction branch migration complex subunit RuvB.